The following is a 211-amino-acid chain: Peptidyl-prolyl cis-trans isomerase FKBP14 (211 aa).

A signal peptide spans 1–19; the sequence is MRLFLWNAVLTLFVTSLIG. The cysteines at positions 38 and 96 are disulfide-linked. A PPIase FKBP-type domain is found at 45 to 135; it reads GDLMLVHYEG…IFNIDLLEIR (91 aa). The region spanning 135–170 is the EF-hand 1 domain; sequence RNGPRSHESFQEMDLNDDWKLSKDEVKAYLKKEFEK. Positions 148, 150, 152, 154, and 159 each coordinate Ca(2+). N-linked (GlcNAc...) asparagine glycosylation occurs at asparagine 176. The EF-hand 2 domain occupies 179 to 211; that stretch reads HHDALVEDIFDKEDEDKDGFISAREFTYKHDEL. Ca(2+) is bound by residues aspartate 192, aspartate 194, aspartate 196, phenylalanine 198, and glutamate 203. Residues 208 to 211 carry the Prevents secretion from ER motif; that stretch reads HDEL.

In terms of assembly, monomer. Homodimer. Interacts with type III, type IV and type X collagens.

The protein resides in the endoplasmic reticulum lumen. It catalyses the reaction [protein]-peptidylproline (omega=180) = [protein]-peptidylproline (omega=0). Its activity is regulated as follows. Inhibited by tacrolimus/FK506. Functionally, PPIase which accelerates the folding of proteins during protein synthesis. Has a preference for substrates containing 4-hydroxylproline modifications, including type III collagen. May also target type VI and type X collagens. The polypeptide is Peptidyl-prolyl cis-trans isomerase FKBP14 (FKBP14) (Homo sapiens (Human)).